The following is a 462-amino-acid chain: Probable Xaa-Pro aminopeptidase pepP (462 aa).

4 residues coordinate Mn(2+): Asp-259, Asp-270, Glu-393, and Glu-433.

This sequence belongs to the peptidase M24B family. Requires Mn(2+) as cofactor.

The enzyme catalyses Release of any N-terminal amino acid, including proline, that is linked to proline, even from a dipeptide or tripeptide.. Functionally, catalyzes the removal of a penultimate prolyl residue from the N-termini of peptides. The protein is Probable Xaa-Pro aminopeptidase pepP (pepP) of Metarhizium robertsii (strain ARSEF 23 / ATCC MYA-3075) (Metarhizium anisopliae (strain ARSEF 23)).